Here is a 90-residue protein sequence, read N- to C-terminus: Small ribosomal subunit protein uS15c (90 aa).

It belongs to the universal ribosomal protein uS15 family. In terms of assembly, part of the 30S ribosomal subunit.

It localises to the plastid. It is found in the chloroplast. This is Small ribosomal subunit protein uS15c (rps15) from Gossypium barbadense (Sea Island cotton).